The primary structure comprises 163 residues: Nucleotide-binding protein YajQ (163 aa).

It belongs to the YajQ family.

In terms of biological role, nucleotide-binding protein. In Salmonella heidelberg (strain SL476), this protein is Nucleotide-binding protein YajQ.